The sequence spans 255 residues: 14-3-3-like protein B (255 aa).

The protein belongs to the 14-3-3 family.

This is 14-3-3-like protein B from Nicotiana tabacum (Common tobacco).